The primary structure comprises 165 residues: Ribosome maturation factor RimM (165 aa).

The PRC barrel domain maps to 94 to 165 (EDEFYIADLN…YGILNYKREV (72 aa)).

It belongs to the RimM family. As to quaternary structure, binds ribosomal protein uS19.

The protein resides in the cytoplasm. An accessory protein needed during the final step in the assembly of 30S ribosomal subunit, possibly for assembly of the head region. Essential for efficient processing of 16S rRNA. May be needed both before and after RbfA during the maturation of 16S rRNA. It has affinity for free ribosomal 30S subunits but not for 70S ribosomes. This Rickettsia canadensis (strain McKiel) protein is Ribosome maturation factor RimM.